A 322-amino-acid polypeptide reads, in one-letter code: Ribosomal RNA small subunit methyltransferase H (322 aa).

S-adenosyl-L-methionine-binding positions include 47–49 (GGH), Asp-67, Phe-93, Asp-112, and Gln-119.

This sequence belongs to the methyltransferase superfamily. RsmH family.

It localises to the cytoplasm. It catalyses the reaction cytidine(1402) in 16S rRNA + S-adenosyl-L-methionine = N(4)-methylcytidine(1402) in 16S rRNA + S-adenosyl-L-homocysteine + H(+). Its function is as follows. Specifically methylates the N4 position of cytidine in position 1402 (C1402) of 16S rRNA. This chain is Ribosomal RNA small subunit methyltransferase H, found in Stenotrophomonas maltophilia (strain R551-3).